Here is a 287-residue protein sequence, read N- to C-terminus: Polyamine aminopropyltransferase (287 aa).

The PABS domain occupies 5–238; it reads EIWYETLHAN…GIMTFAWASQ (234 aa). Q33 contacts S-methyl-5'-thioadenosine. Spermidine is bound by residues H64 and D88. S-methyl-5'-thioadenosine-binding positions include E108 and 140-141; that span reads DG. D158 (proton acceptor) is an active-site residue. 158 to 161 is a spermidine binding site; it reads DCTD. An S-methyl-5'-thioadenosine-binding site is contributed by P165.

This sequence belongs to the spermidine/spermine synthase family. In terms of assembly, homodimer or homotetramer.

It localises to the cytoplasm. It catalyses the reaction S-adenosyl 3-(methylsulfanyl)propylamine + putrescine = S-methyl-5'-thioadenosine + spermidine + H(+). It participates in amine and polyamine biosynthesis; spermidine biosynthesis; spermidine from putrescine: step 1/1. Catalyzes the irreversible transfer of a propylamine group from the amino donor S-adenosylmethioninamine (decarboxy-AdoMet) to putrescine (1,4-diaminobutane) to yield spermidine. The polypeptide is Polyamine aminopropyltransferase (Serratia proteamaculans (strain 568)).